The following is a 188-amino-acid chain: Nicotinamide-nucleotide adenylyltransferase (188 aa).

This sequence belongs to the archaeal NMN adenylyltransferase family.

Its subcellular location is the cytoplasm. The catalysed reaction is beta-nicotinamide D-ribonucleotide + ATP + H(+) = diphosphate + NAD(+). It functions in the pathway cofactor biosynthesis; NAD(+) biosynthesis; NAD(+) from nicotinamide D-ribonucleotide: step 1/1. In Pyrococcus furiosus (strain ATCC 43587 / DSM 3638 / JCM 8422 / Vc1), this protein is Nicotinamide-nucleotide adenylyltransferase.